The chain runs to 83 residues: MALSTRTQAACLLLLLLASLSSTTYLQQQMRQTTELQPLHGEESRADIAIPMQKRRKRDINFPICRFCCQCCNKPSCGICCEE.

A signal peptide spans 1–26 (MALSTRTQAACLLLLLLASLSSTTYL). The propeptide occupies 27-53 (QQQMRQTTELQPLHGEESRADIAIPMQ). Disulfide bonds link Cys65/Cys81, Cys68/Cys71, Cys69/Cys77, and Cys72/Cys80.

It belongs to the hepcidin family. As to expression, highly expressed in the liver and to a much lesser extent in the heart. Also expressed in pancreas.

The protein localises to the secreted. In terms of biological role, seems to act as a signaling molecule involved in the maintenance of iron homeostasis. This chain is Hepcidin-2 (Hamp2), found in Mus musculus (Mouse).